Consider the following 264-residue polypeptide: S-adenosylmethionine decarboxylase proenzyme (264 aa).

The active-site Schiff-base intermediate with substrate; via pyruvic acid is Ser-112. The residue at position 112 (Ser-112) is a Pyruvic acid (Ser); by autocatalysis. The Proton acceptor; for processing activity role is filled by His-117. Cys-140 acts as the Proton donor; for catalytic activity in catalysis.

This sequence belongs to the prokaryotic AdoMetDC family. Type 2 subfamily. As to quaternary structure, heterooctamer of four alpha and four beta chains arranged as a tetramer of alpha/beta heterodimers. The cofactor is pyruvate. Post-translationally, is synthesized initially as an inactive proenzyme. Formation of the active enzyme involves a self-maturation process in which the active site pyruvoyl group is generated from an internal serine residue via an autocatalytic post-translational modification. Two non-identical subunits are generated from the proenzyme in this reaction, and the pyruvate is formed at the N-terminus of the alpha chain, which is derived from the carboxyl end of the proenzyme. The post-translation cleavage follows an unusual pathway, termed non-hydrolytic serinolysis, in which the side chain hydroxyl group of the serine supplies its oxygen atom to form the C-terminus of the beta chain, while the remainder of the serine residue undergoes an oxidative deamination to produce ammonia and the pyruvoyl group blocking the N-terminus of the alpha chain.

The catalysed reaction is S-adenosyl-L-methionine + H(+) = S-adenosyl 3-(methylsulfanyl)propylamine + CO2. Its pathway is amine and polyamine biosynthesis; S-adenosylmethioninamine biosynthesis; S-adenosylmethioninamine from S-adenosyl-L-methionine: step 1/1. In terms of biological role, catalyzes the decarboxylation of S-adenosylmethionine to S-adenosylmethioninamine (dcAdoMet), the propylamine donor required for the synthesis of the polyamines spermine and spermidine from the diamine putrescine. The polypeptide is S-adenosylmethionine decarboxylase proenzyme (Salmonella dublin (strain CT_02021853)).